The sequence spans 513 residues: Serine/threonine-protein kinase PBL27 (513 aa).

The tract at residues 1–61 (MSGCLPCFGS…KKELTAPKEG (61 aa)) is disordered. 2 S-palmitoyl cysteine lipidation sites follow: cysteine 4 and cysteine 7. 2 stretches are compositionally biased toward basic and acidic residues: residues 15 to 27 (AASKDSVKKELSA) and 38 to 57 (ISLDKSKSRRGPEQKKELTA). Residues 83 to 360 (FRPECLLGEG…GDVVTALTYL (278 aa)) enclose the Protein kinase domain. ATP contacts are provided by residues 89–97 (LGEGGFGRV) and lysine 112. Aspartate 210 (proton acceptor) is an active-site residue. Serine 244 is subject to Phosphoserine; by CERK1. Phosphothreonine; by CERK1 occurs at positions 245 and 250. The segment covering 365 to 378 (FDPNAPSGQNSRSG) has biased composition (polar residues). The segment at 365-513 (FDPNAPSGQN…GPGSFDSTND (149 aa)) is disordered. Phosphoserine is present on residues serine 392 and serine 401. The span at 417–428 (NSPDYRRRDMVR) shows a compositional bias: basic and acidic residues. Over residues 434 to 446 (SEGGSETGGGSGR) the composition is skewed to gly residues. Residues 456 to 473 (QESQRGSPASVGRSSRGT) show a composition bias toward polar residues. The segment covering 475 to 486 (RNRDLDRERAVA) has biased composition (basic and acidic residues). Residues 504 to 513 (GPGSFDSTND) are compositionally biased toward polar residues.

The protein belongs to the protein kinase superfamily. Ser/Thr protein kinase family. In terms of assembly, interacts with CERK1 (preferentially unphosphorylated) at the plasma membrane. Binds to MAPKKK5 at the plasma membrane; disassociation is induced by chitin perception by the CERK1 complex. Also associates with MAPKKK3. Post-translationally, phosphorylated by CERK1 upon elicitation by chitin. In terms of processing, palmitoylation at Cys-4 and Cys-7 are required for plasma membrane location.

The protein localises to the cell membrane. The enzyme catalyses L-seryl-[protein] + ATP = O-phospho-L-seryl-[protein] + ADP + H(+). It carries out the reaction L-threonyl-[protein] + ATP = O-phospho-L-threonyl-[protein] + ADP + H(+). Receptor-like cytoplasmic kinase involved in the transduction of signal between the host cell surface chitin receptor complex CERK1-LYK5 and the intracellular MAPKKK5-dependent mitogen-activated protein kinase (MAPK) cascade that leads to chitin-induced immunity. Phosphorylates and activates MAPKKK5 when phosphorylated by CERK1 after elicitation by chitin. This chain is Serine/threonine-protein kinase PBL27, found in Arabidopsis thaliana (Mouse-ear cress).